The following is a 231-amino-acid chain: DNA mismatch repair protein MutH (231 aa).

Belongs to the MutH family.

It localises to the cytoplasm. Its function is as follows. Sequence-specific endonuclease that cleaves unmethylated GATC sequences. It is involved in DNA mismatch repair. The polypeptide is DNA mismatch repair protein MutH (Klebsiella pneumoniae (strain 342)).